A 367-amino-acid polypeptide reads, in one-letter code: Peptide chain release factor 2 (367 aa).

Q250 carries the N5-methylglutamine modification.

It belongs to the prokaryotic/mitochondrial release factor family. In terms of processing, methylated by PrmC. Methylation increases the termination efficiency of RF2.

Its subcellular location is the cytoplasm. In terms of biological role, peptide chain release factor 2 directs the termination of translation in response to the peptide chain termination codons UGA and UAA. The polypeptide is Peptide chain release factor 2 (Mycobacteroides abscessus (strain ATCC 19977 / DSM 44196 / CCUG 20993 / CIP 104536 / JCM 13569 / NCTC 13031 / TMC 1543 / L948) (Mycobacterium abscessus)).